The following is a 376-amino-acid chain: Chaperone protein DnaJ (376 aa).

A J domain is found at 5-70; the sequence is DYYEILGVSK…QKRAAYDQYG (66 aa). A CR-type zinc finger spans residues 131–209; it reads GVTKEIRIPT…CHGHGRVERS (79 aa). Residues C144, C147, C161, C164, C183, C186, C197, and C200 each contribute to the Zn(2+) site. CXXCXGXG motif repeat units follow at residues 144–151, 161–168, 183–190, and 197–204; these read CDVCHGSG, CPTCHGSG, CPHCQGRG, and CNKCHGHG.

Belongs to the DnaJ family. As to quaternary structure, homodimer. Zn(2+) serves as cofactor.

It localises to the cytoplasm. In terms of biological role, participates actively in the response to hyperosmotic and heat shock by preventing the aggregation of stress-denatured proteins and by disaggregating proteins, also in an autonomous, DnaK-independent fashion. Unfolded proteins bind initially to DnaJ; upon interaction with the DnaJ-bound protein, DnaK hydrolyzes its bound ATP, resulting in the formation of a stable complex. GrpE releases ADP from DnaK; ATP binding to DnaK triggers the release of the substrate protein, thus completing the reaction cycle. Several rounds of ATP-dependent interactions between DnaJ, DnaK and GrpE are required for fully efficient folding. Also involved, together with DnaK and GrpE, in the DNA replication of plasmids through activation of initiation proteins. This chain is Chaperone protein DnaJ, found in Escherichia coli (strain K12 / DH10B).